Reading from the N-terminus, the 532-residue chain is 56 kDa type-specific antigen (532 aa).

An N-terminal signal peptide occupies residues 1 to 22; the sequence is MKKIMLIASAMSALSLPFSASA. The helical transmembrane segment at 67–87 threads the bilayer; it reads LTTGLPFGGTLAAGMTIAPGF. Disordered regions lie at residues 113–140 and 400–426; these read KGEI…PQPT and QQEE…SKEG. The span at 403–413 shows a compositional bias: basic and acidic residues; the sequence is EDAKNQGKGDC. Residues 480-500 form a helical membrane-spanning segment; it reads TGMVASGALGVAINAAEGVCV.

It is found in the cell membrane. Its function is as follows. May be an adherent factor for rickettsial adsorption to the host-cell surface and a determinant of virulence of individual rickettsial strain. It is the major outer membrane protein. The polypeptide is 56 kDa type-specific antigen (Orientia tsutsugamushi (Rickettsia tsutsugamushi)).